Reading from the N-terminus, the 61-residue chain is MIDWIVFFALAWGRARVSCALKDENNAPSNSFANHYGERWLDPTARYRRRMSDLLPFCFCA.

This is an uncharacterized protein from Treponema pallidum (strain Nichols).